Reading from the N-terminus, the 157-residue chain is Phosphopantetheine adenylyltransferase (157 aa).

A substrate-binding site is contributed by S9. Residues 9 to 10 (SF) and H17 each bind ATP. 3 residues coordinate substrate: K41, T73, and R87. ATP-binding positions include 88–90 (GIR), E98, and 122–128 (YQDISSS).

This sequence belongs to the bacterial CoaD family. As to quaternary structure, homohexamer. Requires Mg(2+) as cofactor.

It localises to the cytoplasm. It carries out the reaction (R)-4'-phosphopantetheine + ATP + H(+) = 3'-dephospho-CoA + diphosphate. It functions in the pathway cofactor biosynthesis; coenzyme A biosynthesis; CoA from (R)-pantothenate: step 4/5. Functionally, reversibly transfers an adenylyl group from ATP to 4'-phosphopantetheine, yielding dephospho-CoA (dPCoA) and pyrophosphate. This is Phosphopantetheine adenylyltransferase from Oenococcus oeni (strain ATCC BAA-331 / PSU-1).